The following is a 450-amino-acid chain: Tubulin alpha chain (450 aa).

Gln11 lines the GTP pocket. Residue Lys40 is modified to N6-acetyllysine. Glu71, Ser140, Gly144, Thr145, Thr179, Asn206, and Asn228 together coordinate GTP. Glu71 contacts Mg(2+). Residue Glu254 is part of the active site.

The protein belongs to the tubulin family. In terms of assembly, dimer of alpha and beta chains. A typical microtubule is a hollow water-filled tube with an outer diameter of 25 nm and an inner diameter of 15 nM. Alpha-beta heterodimers associate head-to-tail to form protofilaments running lengthwise along the microtubule wall with the beta-tubulin subunit facing the microtubule plus end conferring a structural polarity. Microtubules usually have 13 protofilaments but different protofilament numbers can be found in some organisms and specialized cells. Mg(2+) serves as cofactor. Acetylation of alpha chains at Lys-40 stabilizes microtubules and affects affinity and processivity of microtubule motors. This modification has a role in multiple cellular functions, ranging from cell motility, cell cycle progression or cell differentiation to intracellular trafficking and signaling.

It localises to the cytoplasm. It is found in the cytoskeleton. It carries out the reaction GTP + H2O = GDP + phosphate + H(+). Functionally, tubulin is the major constituent of microtubules, a cylinder consisting of laterally associated linear protofilaments composed of alpha- and beta-tubulin heterodimers. Microtubules grow by the addition of GTP-tubulin dimers to the microtubule end, where a stabilizing cap forms. Below the cap, tubulin dimers are in GDP-bound state, owing to GTPase activity of alpha-tubulin. The sequence is that of Tubulin alpha chain from Tyrophagus putrescentiae (Mold mite).